The primary structure comprises 398 residues: Lysophosphatidylserine lipase ABHD12 (398 aa).

Residues 1-16 (MRKRTEPVALEHERRT) show a composition bias toward basic and acidic residues. Positions 1–24 (MRKRTEPVALEHERRTASGSPSAG) are disordered. Over 1-74 (MRKRTEPVAL…RKGLCFRLRK (74 aa)) the chain is Cytoplasmic. A helical transmembrane segment spans residues 75-95 (ILFFVLGLYVAIPFLIKLCPG). Residues 96–398 (IQAKLIFLNF…LGKSEPGRQH (303 aa)) are Extracellular-facing. A glycan (N-linked (GlcNAc...) asparagine) is linked at N123. Residue S246 is the Nucleophile of the active site. Residues D333 and H372 each act as charge relay system in the active site.

This sequence belongs to the serine esterase family.

It is found in the endoplasmic reticulum membrane. It carries out the reaction 1-(9Z-octadecenoyl)-sn-glycero-3-phospho-L-serine + H2O = sn-glycero-3-phospho-L-serine + (9Z)-octadecenoate + H(+). The enzyme catalyses 1-(9Z-octadecenoyl)-sn-glycero-3-phospho-(1'-sn-glycerol) + H2O = sn-glycero-3-phospho-(1'-sn-glycerol) + (9Z)-octadecenoate + H(+). It catalyses the reaction 1-(9Z-octadecenoyl)-sn-glycero-3-phospho-(1D-myo-inositol) + H2O = sn-glycero-3-phospho-1D-myo-inositol + (9Z)-octadecenoate + H(+). The catalysed reaction is 1-(9Z-octadecenoyl)-sn-glycero-3-phosphoethanolamine + H2O = sn-glycero-3-phosphoethanolamine + (9Z)-octadecenoate + H(+). It carries out the reaction 1-(9Z-octadecenoyl)-sn-glycero-3-phosphocholine + H2O = 1-(9Z-octadecenoyl)-sn-glycerol + phosphocholine + H(+). The enzyme catalyses 2-(9Z-octadecenoyl)-glycerol + H2O = glycerol + (9Z)-octadecenoate + H(+). It catalyses the reaction 1-hexadecanoyl-sn-glycero-3-phospho-L-serine + H2O = sn-glycero-3-phospho-L-serine + hexadecanoate + H(+). The catalysed reaction is 2-(5Z,8Z,11Z,14Z-eicosatetraenoyl)-glycerol + H2O = glycerol + (5Z,8Z,11Z,14Z)-eicosatetraenoate + H(+). It carries out the reaction Hydrolyzes glycerol monoesters of long-chain fatty acids.. The enzyme catalyses 1-decanoylglycerol + H2O = decanoate + glycerol + H(+). It catalyses the reaction 1-dodecanoylglycerol + H2O = dodecanoate + glycerol + H(+). The catalysed reaction is 1-tetradecanoylglycerol + H2O = tetradecanoate + glycerol + H(+). It carries out the reaction 2-hexadecanoylglycerol + H2O = glycerol + hexadecanoate + H(+). The enzyme catalyses 1-(9Z-octadecenoyl)-glycerol + H2O = glycerol + (9Z)-octadecenoate + H(+). It catalyses the reaction 2-(9Z,12Z-octadecadienoyl)-glycerol + H2O = (9Z,12Z)-octadecadienoate + glycerol + H(+). The catalysed reaction is 1-(5Z,8Z,11Z,14Z-eicosatetraenoyl)-glycerol + H2O = glycerol + (5Z,8Z,11Z,14Z)-eicosatetraenoate + H(+). It carries out the reaction 1-(9Z,12Z-octadecadienoyl)-glycerol + H2O = (9Z,12Z)-octadecadienoate + glycerol + H(+). The enzyme catalyses 1-hexadecanoylglycerol + H2O = glycerol + hexadecanoate + H(+). It catalyses the reaction 1-octadecanoylglycerol + H2O = octadecanoate + glycerol + H(+). The catalysed reaction is 1-octadecanoyl-2-(9,10-epoxyoctadecanoyl)-sn-glycero-3-phospho-L-serine + H2O = 9,10-epoxyoctadecanoate + 1-octadecanoyl-sn-glycero-3-phosphoserine + H(+). It carries out the reaction 1-octadecanoyl-2-(10-hydroxyoctadecanoyl)-sn-glycero-3-phospho-L-serine + H2O = 1-octadecanoyl-sn-glycero-3-phosphoserine + 10-hydroxyoctadecanoate + H(+). The enzyme catalyses 1-hexadecanoyl-2-(10-hydroxyoctadecanoyl)-sn-glycero-3-phospho-L-serine + H2O = 10-hydroxyoctadecanoate + 1-hexadecanoyl-sn-glycero-3-phospho-L-serine + H(+). Lysophosphatidylserine (LPS) lipase that mediates the hydrolysis of lysophosphatidylserine, a class of signaling lipids that regulates immunological and neurological processes. Represents a major lysophosphatidylserine lipase in the brain, thereby playing a key role in the central nervous system. Also able to hydrolyze oxidized phosphatidylserine; oxidized phosphatidylserine is produced in response to severe inflammatory stress and constitutes a proapoptotic 'eat me' signal. Also has monoacylglycerol (MAG) lipase activity: hydrolyzes 2-arachidonoylglycerol (2-AG), thereby acting as a regulator of endocannabinoid signaling pathways. Has a strong preference for very-long-chain lipid substrates; substrate specificity is likely due to improved catalysis and not improved substrate binding. This Bos taurus (Bovine) protein is Lysophosphatidylserine lipase ABHD12.